We begin with the raw amino-acid sequence, 150 residues long: D-aminoacyl-tRNA deacylase (150 aa).

The Gly-cisPro motif, important for rejection of L-amino acids motif lies at 138-139; the sequence is GP.

It belongs to the DTD family. In terms of assembly, homodimer.

It localises to the cytoplasm. It carries out the reaction glycyl-tRNA(Ala) + H2O = tRNA(Ala) + glycine + H(+). The enzyme catalyses a D-aminoacyl-tRNA + H2O = a tRNA + a D-alpha-amino acid + H(+). Its function is as follows. An aminoacyl-tRNA editing enzyme that deacylates mischarged D-aminoacyl-tRNAs. Also deacylates mischarged glycyl-tRNA(Ala), protecting cells against glycine mischarging by AlaRS. Acts via tRNA-based rather than protein-based catalysis; rejects L-amino acids rather than detecting D-amino acids in the active site. By recycling D-aminoacyl-tRNA to D-amino acids and free tRNA molecules, this enzyme counteracts the toxicity associated with the formation of D-aminoacyl-tRNA entities in vivo and helps enforce protein L-homochirality. This chain is D-aminoacyl-tRNA deacylase, found in Dechloromonas aromatica (strain RCB).